Here is an 87-residue protein sequence, read N- to C-terminus: Type 3 secretion system needle filament protein (87 aa).

The protein belongs to the SctF family. In terms of assembly, the core secretion machinery of the T3SS is composed of approximately 20 different proteins, including cytoplasmic components, a base, an export apparatus and a needle. This subunit polymerizes and forms the helical needle filament. In Y.enterocolitica E40, the needles are composed of 139 (plus-minus 19) YscF/SctF subunits.

The protein localises to the secreted. It is found in the cell surface. With respect to regulation, the secretion and/or polymerization may be controlled by the type III secretion system regulator YopR. In terms of biological role, component of the type III secretion system (T3SS), also called injectisome, which is used to inject bacterial effector proteins into eukaryotic host cells. YscF/SctF forms the external needle filament that protrudes from the bacterial surface. The needle is not sufficient by itself for the formation of a pore allowing translocation of the Yop effectors across the host cell membrane. The polypeptide is Type 3 secretion system needle filament protein (Yersinia enterocolitica).